The chain runs to 1103 residues: A disintegrin and metalloproteinase with thrombospondin motifs 10 (1103 aa).

A signal peptide spans 1-25; that stretch reads MAPACQILRWALALGLGLMFEVTHA. Positions 26–233 are excised as a propeptide; it reads FRSQDEFLSS…TERGQPGLKR (208 aa). 3 N-linked (GlcNAc...) asparagine glycosylation sites follow: asparagine 90, asparagine 222, and asparagine 323. Positions 213–233 are disordered; the sequence is KPPPARPLGNETERGQPGLKR. A Peptidase M12B domain is found at 239–457; it reads RYVETLVVAD…GLGLCLNNRP (219 aa). 11 cysteine pairs are disulfide-bonded: cysteine 315–cysteine 376, cysteine 351–cysteine 358, cysteine 370–cysteine 452, cysteine 409–cysteine 436, cysteine 479–cysteine 501, cysteine 490–cysteine 508, cysteine 496–cysteine 531, cysteine 521–cysteine 536, cysteine 559–cysteine 596, cysteine 563–cysteine 601, and cysteine 574–cysteine 586. A Zn(2+)-binding site is contributed by histidine 392. Glutamate 393 is a catalytic residue. Zn(2+) contacts are provided by histidine 396 and histidine 402. Residues 460–546 form the Disintegrin domain; that stretch reads QDFVYPTVAP…VPFGSRPEGV (87 aa). Positions 547–602 constitute a TSP type-1 1 domain; sequence DGAWGPWTPWGDCSRTCGGGVSSSSRHCDSPRPTIGGKYCLGERRRHRSCNTDDCP. Residues 706-828 are spacer; that stretch reads ETIEGVFSPA…IARDSLPPYS (123 aa). 2 N-linked (GlcNAc...) asparagine glycosylation sites follow: asparagine 740 and asparagine 795. TSP type-1 domains lie at 825–883, 884–945, 947–1001, and 1003–1058; these read PPYS…NTEP, CPPD…PTCP, EWAA…NLRR, and PPAR…AKCD. Asparagine 892 is a glycosylation site (N-linked (GlcNAc...) asparagine). A PLAC domain is found at 1065–1103; sequence GPEECKDVNKVAYCPLVLKFQFCSRAYFRQMCCKTCHGH.

As to quaternary structure, interacts with FBN1; this interaction promotes microfibrils assembly. The cofactor is Zn(2+). Glycosylated. Can be O-fucosylated by POFUT2 on a serine or a threonine residue found within the consensus sequence C1-X(2)-(S/T)-C2-G of the TSP type-1 repeat domains where C1 and C2 are the first and second cysteine residue of the repeat, respectively. Fucosylated repeats can then be further glycosylated by the addition of a beta-1,3-glucose residue by the glucosyltransferase, B3GALTL. Fucosylation mediates the efficient secretion of ADAMTS family members. Can also be C-glycosylated with one or two mannose molecules on tryptophan residues within the consensus sequence W-X-X-W of the TPRs, and N-glycosylated. These other glycosylations can also facilitate secretion. In terms of tissue distribution, widely expressed in adult tissues.

It localises to the secreted. It is found in the extracellular space. Its subcellular location is the extracellular matrix. Its function is as follows. Metalloprotease that participate in microfibrils assembly. Microfibrils are extracellular matrix components occurring independently or along with elastin in the formation of elastic tissues. In Homo sapiens (Human), this protein is A disintegrin and metalloproteinase with thrombospondin motifs 10 (ADAMTS10).